Reading from the N-terminus, the 301-residue chain is Hydroxymethylglutaryl-CoA lyase (301 aa).

The region spanning 4–271 (VKVFEVGPRD…STGVDLEAVA (268 aa)) is the Pyruvate carboxyltransferase domain. Substrate is bound at residue arginine 12. A divalent metal cation contacts are provided by aspartate 13, histidine 204, and histidine 206. Residue cysteine 237 is part of the active site. Asparagine 246 contacts a divalent metal cation.

Belongs to the HMG-CoA lyase family.

It carries out the reaction (3S)-3-hydroxy-3-methylglutaryl-CoA = acetoacetate + acetyl-CoA. It participates in metabolic intermediate metabolism; (S)-3-hydroxy-3-methylglutaryl-CoA degradation; acetoacetate from (S)-3-hydroxy-3-methylglutaryl-CoA: step 1/1. Functionally, involved in the catabolism of branched amino acids such as leucine. This chain is Hydroxymethylglutaryl-CoA lyase (mvaB), found in Pseudomonas mevalonii.